The chain runs to 115 residues: Superoxide reductase (115 aa).

6 residues coordinate Fe cation: E14, H16, H41, H47, C102, and H105.

The protein belongs to the desulfoferrodoxin family. As to quaternary structure, homotetramer. It depends on Fe cation as a cofactor.

The enzyme catalyses reduced [rubredoxin] + superoxide + 2 H(+) = oxidized [rubredoxin] + H2O2. In terms of biological role, uses electrons from reduced NADP, by way of rubredoxin and an oxidoreductase, to catalyze the reduction of superoxide to hydrogen peroxide. The polypeptide is Superoxide reductase (sorA) (Pyrococcus abyssi (strain GE5 / Orsay)).